The chain runs to 173 residues: NADH-ubiquinone oxidoreductase chain 6 (173 aa).

5 consecutive transmembrane segments (helical) span residues 1–21 (MTYF…AVAS), 27–47 (YGVV…MSLG), 48–68 (MSFV…VVFV), 87–107 (VVGY…VGGL), and 139–159 (CGVG…FVVL).

It belongs to the complex I subunit 6 family.

Its subcellular location is the mitochondrion membrane. The catalysed reaction is a ubiquinone + NADH + 5 H(+)(in) = a ubiquinol + NAD(+) + 4 H(+)(out). In terms of biological role, core subunit of the mitochondrial membrane respiratory chain NADH dehydrogenase (Complex I) that is believed to belong to the minimal assembly required for catalysis. Complex I functions in the transfer of electrons from NADH to the respiratory chain. The immediate electron acceptor for the enzyme is believed to be ubiquinone. The polypeptide is NADH-ubiquinone oxidoreductase chain 6 (MT-ND6) (Synthliboramphus antiquus (Ancient murrelet)).